The chain runs to 360 residues: MSDIHAKKFSKQSSIPGMKLIPGLILAAILTAISIYAGNIPWFINMGLGTLTLAILAGIIVGNTVYPLLKPYCDEGIHFSKHYLLRAGIILYGFRLTFQQIADVGITGLLIDAAMLSSTFFIAIWLGKSLFGLDQQTVILIGAGSSICGAAAIMATEPVVNAPASKVAVAVSTIVIFGTIAIFIYPWFYQLNEHYQWLPLTQETFGIFTGSTLHEVAQVVAVGHAISDQTENVAVISKMIRVMMLAPFLLLLSRYINHADTKNGRNHQEKTPITIPWFAVIFIAIAGFNSFNLLPAAIVNSLINIDTIMLTMAMGALGLTTHVSAIRQAGFKPILLALILFVWLMAGGLLINLGIQHLFG.

A run of 9 helical transmembrane segments spans residues 20–42 (LIPG…NIPW), 47–69 (GLGT…YPLL), 104–126 (VGIT…AIWL), 136–155 (QTVI…AIMA), 167–189 (VAVA…PWFY), 239–256 (MIRV…SRYI), 277–299 (WFAV…AAIV), 304–326 (NIDT…VSAI), and 333–355 (PILL…NLGI).

The protein belongs to the UPF0324 family.

The protein resides in the cell membrane. The protein is UPF0324 membrane protein plu2856 of Photorhabdus laumondii subsp. laumondii (strain DSM 15139 / CIP 105565 / TT01) (Photorhabdus luminescens subsp. laumondii).